Here is a 600-residue protein sequence, read N- to C-terminus: NADH-quinone oxidoreductase subunit C/D (600 aa).

The segment at 1 to 190 (MVNNMTDLTA…DPFELTKAKQ (190 aa)) is NADH dehydrogenase I subunit C. The interval 214–600 (DFMFLNLGPN…IDFVMSDVDR (387 aa)) is NADH dehydrogenase I subunit D.

This sequence in the N-terminal section; belongs to the complex I 30 kDa subunit family. In the C-terminal section; belongs to the complex I 49 kDa subunit family. As to quaternary structure, NDH-1 is composed of 13 different subunits. Subunits NuoB, CD, E, F, and G constitute the peripheral sector of the complex.

The protein resides in the cell inner membrane. The enzyme catalyses a quinone + NADH + 5 H(+)(in) = a quinol + NAD(+) + 4 H(+)(out). Its function is as follows. NDH-1 shuttles electrons from NADH, via FMN and iron-sulfur (Fe-S) centers, to quinones in the respiratory chain. The immediate electron acceptor for the enzyme in this species is believed to be ubiquinone. Couples the redox reaction to proton translocation (for every two electrons transferred, four hydrogen ions are translocated across the cytoplasmic membrane), and thus conserves the redox energy in a proton gradient. The chain is NADH-quinone oxidoreductase subunit C/D from Salmonella paratyphi C (strain RKS4594).